We begin with the raw amino-acid sequence, 206 residues long: LexA repressor (206 aa).

The segment at residues 28–48 is a DNA-binding region (H-T-H motif); it reads VREIGEAVGLASSSTVHGHLA. Active-site for autocatalytic cleavage activity residues include Ser-128 and Lys-166.

This sequence belongs to the peptidase S24 family. In terms of assembly, homodimer.

The enzyme catalyses Hydrolysis of Ala-|-Gly bond in repressor LexA.. Functionally, represses a number of genes involved in the response to DNA damage (SOS response), including recA and lexA. In the presence of single-stranded DNA, RecA interacts with LexA causing an autocatalytic cleavage which disrupts the DNA-binding part of LexA, leading to derepression of the SOS regulon and eventually DNA repair. This chain is LexA repressor, found in Bacillus pumilus (strain SAFR-032).